The chain runs to 273 residues: 2-dehydro-3-deoxyphosphooctonate aldolase (273 aa).

It belongs to the KdsA family.

It is found in the cytoplasm. The catalysed reaction is D-arabinose 5-phosphate + phosphoenolpyruvate + H2O = 3-deoxy-alpha-D-manno-2-octulosonate-8-phosphate + phosphate. Its pathway is carbohydrate biosynthesis; 3-deoxy-D-manno-octulosonate biosynthesis; 3-deoxy-D-manno-octulosonate from D-ribulose 5-phosphate: step 2/3. The protein operates within bacterial outer membrane biogenesis; lipopolysaccharide biosynthesis. The polypeptide is 2-dehydro-3-deoxyphosphooctonate aldolase (Geobacter sp. (strain M21)).